The following is a 201-amino-acid chain: 3-isopropylmalate dehydratase small subunit (201 aa).

It belongs to the LeuD family. LeuD type 1 subfamily. Heterodimer of LeuC and LeuD.

It carries out the reaction (2R,3S)-3-isopropylmalate = (2S)-2-isopropylmalate. It functions in the pathway amino-acid biosynthesis; L-leucine biosynthesis; L-leucine from 3-methyl-2-oxobutanoate: step 2/4. In terms of biological role, catalyzes the isomerization between 2-isopropylmalate and 3-isopropylmalate, via the formation of 2-isopropylmaleate. This chain is 3-isopropylmalate dehydratase small subunit, found in Shewanella amazonensis (strain ATCC BAA-1098 / SB2B).